Here is a 351-residue protein sequence, read N- to C-terminus: Dysbindin (351 aa).

Residues 106–179 (FLADLECLTA…AELDAEHAQK (74 aa)) are a coiled coil. The interval 291–325 (RHKLSSLSSTCTDSASQEASEGESPVVQSDEEEVQ) is disordered. Over residues 295–306 (SSLSSTCTDSAS) the composition is skewed to low complexity.

It belongs to the dysbindin family. Component of the biogenesis of lysosome-related organelles complex 1 (BLOC-1).

The protein localises to the cytoplasm. The protein resides in the cytoplasmic vesicle membrane. It is found in the cytoplasmic vesicle. It localises to the secretory vesicle. Its subcellular location is the synaptic vesicle membrane. The protein localises to the endosome membrane. The protein resides in the melanosome membrane. It is found in the nucleus. It localises to the postsynaptic density. Its subcellular location is the endoplasmic reticulum. Functionally, component of the BLOC-1 complex, a complex that is required for normal biogenesis of lysosome-related organelles (LRO), such as platelet dense granules and melanosomes. Plays a role in intracellular vesicle trafficking. Plays a role in synaptic vesicle trafficking and in neurotransmitter release. May be required for normal dopamine homeostasis in the cerebral cortex, hippocampus, and hypothalamus. Plays a role in the regulation of cell surface exposure of DRD2. Contributes to the regulation of dopamine signaling. May play a role in actin cytoskeleton reorganization and neurite outgrowth. This is Dysbindin (DTNBP1) from Gallus gallus (Chicken).